A 124-amino-acid chain; its full sequence is Large ribosomal subunit protein uL22 (124 aa).

Belongs to the universal ribosomal protein uL22 family. Part of the 50S ribosomal subunit.

Its function is as follows. This protein binds specifically to 23S rRNA; its binding is stimulated by other ribosomal proteins, e.g. L4, L17, and L20. It is important during the early stages of 50S assembly. It makes multiple contacts with different domains of the 23S rRNA in the assembled 50S subunit and ribosome. Functionally, the globular domain of the protein is located near the polypeptide exit tunnel on the outside of the subunit, while an extended beta-hairpin is found that lines the wall of the exit tunnel in the center of the 70S ribosome. The chain is Large ribosomal subunit protein uL22 from Macrococcus caseolyticus (strain JCSC5402) (Macrococcoides caseolyticum).